Reading from the N-terminus, the 438-residue chain is Porin O (438 aa).

The N-terminal stretch at 1–24 (MIRKHSLGFVASALALAVSAQAFA) is a signal peptide.

It belongs to the OprO/OprP family.

It localises to the cell outer membrane. Functionally, anion specific, the binding site has higher affinity for phosphate than chloride ions. Porin O has a higher affinity for polyphosphates (tripolyphosphate and pyrophosphate) while porin P has a higher affinity for orthophosphate. In Pseudomonas aeruginosa (strain ATCC 15692 / DSM 22644 / CIP 104116 / JCM 14847 / LMG 12228 / 1C / PRS 101 / PAO1), this protein is Porin O (oprO).